The sequence spans 736 residues: Alpha-xylosidase A (736 aa).

A signal peptide spans methionine 1–alanine 18. Residues asparagine 24, asparagine 279, asparagine 332, and asparagine 376 are each glycosylated (N-linked (GlcNAc...) asparagine). Residue aspartate 413 is part of the active site. N-linked (GlcNAc...) asparagine glycosylation occurs at asparagine 471. Residue aspartate 505 is the Proton donor of the active site. Residues asparagine 655, asparagine 676, asparagine 690, and asparagine 701 are each glycosylated (N-linked (GlcNAc...) asparagine).

Belongs to the glycosyl hydrolase 31 family.

The protein localises to the secreted. It carries out the reaction Hydrolysis of terminal, non-reducing alpha-D-xylose residues with release of alpha-D-xylose.. In terms of biological role, catalyzes the liberation of alpha-xylose from the non-reducing terminal glucose of xyloglucan oligosaccharides. This is Alpha-xylosidase A from Aspergillus niger (strain ATCC MYA-4892 / CBS 513.88 / FGSC A1513).